The primary structure comprises 586 residues: A-type ATP synthase subunit A (586 aa).

232–239 contacts ATP; it reads GPFGSGKT.

This sequence belongs to the ATPase alpha/beta chains family. Has multiple subunits with at least A(3), B(3), C, D, E, F, H, I and proteolipid K(x).

Its subcellular location is the cell membrane. The enzyme catalyses ATP + H2O + 4 H(+)(in) = ADP + phosphate + 5 H(+)(out). In terms of biological role, component of the A-type ATP synthase that produces ATP from ADP in the presence of a proton gradient across the membrane. The A chain is the catalytic subunit. The protein is A-type ATP synthase subunit A of Methanococcus maripaludis (strain C5 / ATCC BAA-1333).